A 456-amino-acid polypeptide reads, in one-letter code: UDP-N-acetylglucosamine 1-carboxyvinyltransferase (456 aa).

Position 34–35 (34–35 (KN)) interacts with phosphoenolpyruvate. Position 104 (arginine 104) interacts with UDP-N-acetyl-alpha-D-glucosamine. Cysteine 128 serves as the catalytic Proton donor. Cysteine 128 bears the 2-(S-cysteinyl)pyruvic acid O-phosphothioketal mark. Residues aspartate 319 and isoleucine 341 each coordinate UDP-N-acetyl-alpha-D-glucosamine.

Belongs to the EPSP synthase family. MurA subfamily.

The protein localises to the cytoplasm. The enzyme catalyses phosphoenolpyruvate + UDP-N-acetyl-alpha-D-glucosamine = UDP-N-acetyl-3-O-(1-carboxyvinyl)-alpha-D-glucosamine + phosphate. Its pathway is cell wall biogenesis; peptidoglycan biosynthesis. Functionally, cell wall formation. Adds enolpyruvyl to UDP-N-acetylglucosamine. This chain is UDP-N-acetylglucosamine 1-carboxyvinyltransferase, found in Prochlorococcus marinus (strain AS9601).